Reading from the N-terminus, the 84-residue chain is Small ribosomal subunit protein uS17 (84 aa).

This sequence belongs to the universal ribosomal protein uS17 family. As to quaternary structure, part of the 30S ribosomal subunit.

One of the primary rRNA binding proteins, it binds specifically to the 5'-end of 16S ribosomal RNA. This is Small ribosomal subunit protein uS17 from Borreliella afzelii (strain PKo) (Borrelia afzelii).